Consider the following 138-residue polypeptide: Prefoldin subunit alpha (138 aa).

This sequence belongs to the prefoldin subunit alpha family. As to quaternary structure, heterohexamer of two alpha and four beta subunits.

The protein resides in the cytoplasm. In terms of biological role, molecular chaperone capable of stabilizing a range of proteins. Seems to fulfill an ATP-independent, HSP70-like function in archaeal de novo protein folding. This Methanosphaera stadtmanae (strain ATCC 43021 / DSM 3091 / JCM 11832 / MCB-3) protein is Prefoldin subunit alpha.